The primary structure comprises 109 residues: Large ribosomal subunit protein uL22 (109 aa).

The protein belongs to the universal ribosomal protein uL22 family. Part of the 50S ribosomal subunit.

Functionally, this protein binds specifically to 23S rRNA; its binding is stimulated by other ribosomal proteins, e.g. L4, L17, and L20. It is important during the early stages of 50S assembly. It makes multiple contacts with different domains of the 23S rRNA in the assembled 50S subunit and ribosome. The globular domain of the protein is located near the polypeptide exit tunnel on the outside of the subunit, while an extended beta-hairpin is found that lines the wall of the exit tunnel in the center of the 70S ribosome. This chain is Large ribosomal subunit protein uL22, found in Polaromonas sp. (strain JS666 / ATCC BAA-500).